The sequence spans 457 residues: Sensor protein CpxA (457 aa).

Over 1-7 (MIGSLTA) the chain is Cytoplasmic. A helical membrane pass occupies residues 8–29 (RIFAIFWLTLALVLMLVLMLPK). At 30-163 (LDSRQMTELL…SDFINLLFDR (134 aa)) the chain is on the periplasmic side. A helical membrane pass occupies residues 164 to 184 (PLLLLIVTMLVSTPLLLWLAW). The region spanning 185–237 (SLAKPARKLKNAADEVAQGNLRQHPELEAGPQEFLAAGASFNQMVTALERMMT) is the HAMP domain. The Cytoplasmic portion of the chain corresponds to 185–457 (SLAKPARKLK…VIWLPLYKRS (273 aa)). Positions 245–455 (DISHELRTPL…RLVIWLPLYK (211 aa)) constitute a Histidine kinase domain. Histidine 248 bears the Phosphohistidine; by autocatalysis mark.

It is found in the cell inner membrane. The catalysed reaction is ATP + protein L-histidine = ADP + protein N-phospho-L-histidine.. This protein is involved in several diverse cellular processes, such as the functioning of acetohydroxyacid synthetase I, in the biosynthesis of isoleucine and valine, the TraJ protein activation activity for tra gene expression in F plasmid, and the synthesis, translocation, or stability of cell envelope proteins. Activates CpxR by phosphorylation. In Escherichia coli O157:H7, this protein is Sensor protein CpxA (cpxA).